The sequence spans 536 residues: Cytoplasmic dynein 2 intermediate chain 2 (536 aa).

S15 bears the Phosphoserine mark. A DYNLL2 binding region spans residues 80-93 (RNHVDAQVQTEAPV). A DYNLRB1 binding region spans residues 106 to 131 (PRLAAFLRRVEAMVIRELNKNWQSHA). WD repeat units follow at residues 215-255 (EVPS…DPLL), 264-308 (THTD…QLQL), 390-430 (PHGG…PLTS), 433-473 (LSLK…QKPT), and 480-520 (QDES…TEQG).

The protein belongs to the dynein light intermediate chain family. The cytoplasmic dynein 2 complex consists of two catalytic heavy chains (HCs) and a number of non-catalytic subunits presented by intermediate chains (ICs), light intermediate chains (LICs) and light chains (LCs). Among them, a heavy chain (DYNC2H1), two intermediate chains (DYNC2I2 and DYNC2I1), a light intermediate chain (DYNC2LI1), and a light chain (DYNLT2B) are unique to the cytoplasmic dynein complex 2, but a subset of the light chains are also shared by dynein-1 and dynein-2 complexes. Interacts with DYNC2I1; their C-terminal domains each bind a copy of the heavy chain, and their extended N-terminal regions are held together by an array of light chain dimers. Interacts with DYNLL2; this interaction is essential for dynein-2-mediated retrograde trafficking of ciliary proteins. Interacts with DYNLRB1; this interaction is essential for dynein-2-mediated retrograde trafficking of ciliary proteins. Interacts (via the WD domains) with MAP3K7 and TAB3. Interacts (via WD domains) with TAB2 (via C-terminus). Interacts (via WD domains) with TRAF6 (via TRAF-type domains). Expressed in several cell lines (at protein level).

Its subcellular location is the cytoplasm. The protein localises to the cytoskeleton. It is found in the cilium basal body. It localises to the cilium axoneme. The protein resides in the microtubule organizing center. Its subcellular location is the centrosome. The protein localises to the cell projection. It is found in the cilium. It localises to the filopodium. Its function is as follows. Acts as one of several non-catalytic accessory components of the cytoplasmic dynein 2 complex (dynein-2 complex), a motor protein complex that drives the movement of cargos along microtubules within cilia and flagella in concert with the intraflagellar transport (IFT) system. DYNC2I2 plays a major role in retrograde ciliary protein trafficking and in ciliogenesis. Required also to maintain a functional transition zone. In terms of biological role, acts as a negative regulator of the Toll-like and IL-1R receptor signaling pathways. Inhibits the MAP3K7-induced NF-kappa-B activation pathway. Inhibits MAP3K7 phosphorylation at 'Thr-184' and 'Thr-187' upon Il-1 beta stimulation. This chain is Cytoplasmic dynein 2 intermediate chain 2, found in Homo sapiens (Human).